The sequence spans 192 residues: Ion-translocating oxidoreductase complex subunit B (192 aa).

The segment at 1–26 (MNAIWIAVAAVSLLGLAFGAILGYAS) is hydrophobic. Residues 32–91 (EDDPVVEKIDEILPQSQCGQCGYPGCRPYAEAISCNGEKINRCAPGGEAVMLKIAELLNV) enclose the 4Fe-4S domain. Cys-49, Cys-52, Cys-57, Cys-74, Cys-117, Cys-120, Cys-123, Cys-127, Cys-147, Cys-150, Cys-153, and Cys-157 together coordinate [4Fe-4S] cluster. 4Fe-4S ferredoxin-type domains follow at residues 108 to 137 (MVAFIDENNCIGCTKCIQACPVDAIVGATR) and 138 to 167 (AMHTVMSDLCTGCNLCVDPCPTHCISLQPV).

This sequence belongs to the 4Fe4S bacterial-type ferredoxin family. RnfB subfamily. The complex is composed of six subunits: RsxA, RsxB, RsxC, RsxD, RsxE and RsxG. [4Fe-4S] cluster is required as a cofactor.

The protein resides in the cell inner membrane. Its function is as follows. Part of a membrane-bound complex that couples electron transfer with translocation of ions across the membrane. Required to maintain the reduced state of SoxR. The chain is Ion-translocating oxidoreductase complex subunit B from Escherichia coli O17:K52:H18 (strain UMN026 / ExPEC).